A 337-amino-acid chain; its full sequence is Anthranilate phosphoribosyltransferase (337 aa).

5-phospho-alpha-D-ribose 1-diphosphate is bound by residues Gly81, Gly84 to Asp85, Ser89, Asn91 to Thr94, Lys109 to Ser117, and Ala121. Gly81 is a binding site for anthranilate. Ser93 serves as a coordination point for Mg(2+). Residue Asn112 coordinates anthranilate. Position 167 (Arg167) interacts with anthranilate. 2 residues coordinate Mg(2+): Asp226 and Glu227.

The protein belongs to the anthranilate phosphoribosyltransferase family. Homodimer. Mg(2+) serves as cofactor.

It catalyses the reaction N-(5-phospho-beta-D-ribosyl)anthranilate + diphosphate = 5-phospho-alpha-D-ribose 1-diphosphate + anthranilate. The protein operates within amino-acid biosynthesis; L-tryptophan biosynthesis; L-tryptophan from chorismate: step 2/5. In terms of biological role, catalyzes the transfer of the phosphoribosyl group of 5-phosphorylribose-1-pyrophosphate (PRPP) to anthranilate to yield N-(5'-phosphoribosyl)-anthranilate (PRA). In Methylorubrum extorquens (strain PA1) (Methylobacterium extorquens), this protein is Anthranilate phosphoribosyltransferase.